Consider the following 167-residue polypeptide: CASP-like protein UU1 (167 aa).

Over 1–17 (MVELESQEAVTVASTAD) the chain is Cytoplasmic. A helical membrane pass occupies residues 18 to 38 (IAVDVSLRLLAAATSLASAVV). Residues 39–54 (VAANHQQRWGVRVDFT) lie on the Extracellular side of the membrane. The chain crosses the membrane as a helical span at residues 55 to 75 (LFQVWIGFVAVNLVCTVYAAA). Over 76–94 (TAAAARKAMGRWWLHHADA) the chain is Cytoplasmic. A helical transmembrane segment spans residues 95–115 (VVVNLEAAATAGAGAIGSIAM). Over 116–135 (WGNEASGWYAVCRLYRRYCN) the chain is Extracellular. Residues 136–156 (AGAAALALSLAAVLLLGVACA) form a helical membrane-spanning segment. Residues 157–167 (RSRYPKMPPTT) are Cytoplasmic-facing.

This sequence belongs to the Casparian strip membrane proteins (CASP) family. In terms of assembly, homodimer and heterodimers.

Its subcellular location is the cell membrane. This is CASP-like protein UU1 from Oryza sativa subsp. indica (Rice).